A 265-amino-acid polypeptide reads, in one-letter code: Ribosomal RNA large subunit methyltransferase E (265 aa).

Positions 83, 85, 106, 122, and 146 each coordinate S-adenosyl-L-methionine. Residue Lys186 is the Proton acceptor of the active site. Positions Lys230–Gly265 are disordered. Residues Arg243–Ser257 show a composition bias toward basic and acidic residues.

The protein belongs to the class I-like SAM-binding methyltransferase superfamily. RNA methyltransferase RlmE family.

The protein resides in the cytoplasm. The enzyme catalyses uridine(2552) in 23S rRNA + S-adenosyl-L-methionine = 2'-O-methyluridine(2552) in 23S rRNA + S-adenosyl-L-homocysteine + H(+). Its function is as follows. Specifically methylates the uridine in position 2552 of 23S rRNA at the 2'-O position of the ribose in the fully assembled 50S ribosomal subunit. The sequence is that of Ribosomal RNA large subunit methyltransferase E from Mesorhizobium japonicum (strain LMG 29417 / CECT 9101 / MAFF 303099) (Mesorhizobium loti (strain MAFF 303099)).